The sequence spans 831 residues: Pleckstrin homology-like domain family B member 1 (831 aa).

Over residues 1–11 (LTLGARGRRTR) the composition is skewed to basic residues. A disordered region spans residues 1–73 (LTLGARGRRT…PIPRERKNSI (73 aa)). Omega-N-methylarginine is present on arginine 6. Phosphoserine is present on residues serine 12 and serine 14. Threonine 16 bears the Phosphothreonine mark. Serine 27, serine 33, serine 45, serine 49, serine 57, serine 72, serine 77, and serine 175 each carry phosphoserine. Positions 39-51 (GSLTGASPRQSPH) are enriched in polar residues. 2 disordered regions span residues 160-209 (RSGE…LQGE) and 416-465 (NGDM…QNGT). Positions 174-188 (ESMERSDEENLKEEC) are enriched in basic and acidic residues. A coiled-coil region spans residues 180-306 (DEENLKEECS…TETKLFEDLE (127 aa)). Residues serine 421 and serine 467 each carry the phosphoserine modification. Low complexity predominate over residues 421-442 (SPLPRTRSGPLPSSSGSSSSSS). Positions 584-603 (SMETSISTGGNSACSPDNMS) are disordered. Residues 610 to 676 (MGKIEEMEKM…QQLVEKEVKL (67 aa)) adopt a coiled-coil conformation. Residues 721-824 (SKVCRGYLIK…WMDVIVTGAE (104 aa)) enclose the PH domain.

This chain is Pleckstrin homology-like domain family B member 1 (Phldb1), found in Rattus norvegicus (Rat).